The following is a 421-amino-acid chain: MKKIVINGGKRISGTIPISGAKNSVVALIPATILANDVVTLEGVPDISDVASLVEIMEIMGAKIERNLEEGRLVIDTRSVVSRPLPYGKINSLRASYYFNGALLGRFGQATVGLPGGCDLGPRPTDLHDKAFKALGAKKIQEEEAEHLEVIGDSLVGTTIYMDVVSVGATINTMLAASRAKGLTIIENAAREPEIIDVATLINNMGAQVRGAGTDIIRITGVDEMHGAQHTVIPDRIEAGTYLALAAAMGDGVIIENVIYEHLESFIAKLEEMGVGLTIREDSIEVHKSENLKSVNITSVPYPGFATDLQQPITPLLLKAKGRGSIVDTIYQKRVNHVPELARMGANISVLDDRIIYDAPNELTGSCVQATDLRAGAALVTAGIIASGTTKISNIEFILRGYDHIIEKLTAVGVDIQLIEE.

22–23 (KN) is a binding site for phosphoenolpyruvate. R94 is a UDP-N-acetyl-alpha-D-glucosamine binding site. C118 functions as the Proton donor in the catalytic mechanism. C118 is modified (2-(S-cysteinyl)pyruvic acid O-phosphothioketal). UDP-N-acetyl-alpha-D-glucosamine is bound by residues D308 and I330.

This sequence belongs to the EPSP synthase family. MurA subfamily.

The protein localises to the cytoplasm. It catalyses the reaction phosphoenolpyruvate + UDP-N-acetyl-alpha-D-glucosamine = UDP-N-acetyl-3-O-(1-carboxyvinyl)-alpha-D-glucosamine + phosphate. Its pathway is cell wall biogenesis; peptidoglycan biosynthesis. Functionally, cell wall formation. Adds enolpyruvyl to UDP-N-acetylglucosamine. This Lactococcus lactis subsp. lactis (strain IL1403) (Streptococcus lactis) protein is UDP-N-acetylglucosamine 1-carboxyvinyltransferase 2.